The following is a 227-amino-acid chain: A-type potassium channel modulatory protein KCNIP1 (227 aa).

One can recognise an EF-hand 1; degenerate domain in the interval 38–94; it reads LEMTMVCHRPEGLEQLEAQTNFTKRELQVLYRGFKNECPSGVVNEETFKQIYAQFFP. EF-hand domains follow at residues 97-132, 133-168, and 181-216; these read DASTYAHYLFNAFDTTQTGSVKFEDFVTALSILLRG, TVHEKLRWTFNLYDINKDGYINKEEMMDIVKAIYDM, and TPRQHVDVFFQKMDKNKDGIVTLDEFLESCQEDDNI. Residues aspartate 146, asparagine 148, aspartate 150, tyrosine 152, glutamate 157, aspartate 194, asparagine 196, aspartate 198, and glutamate 205 each coordinate Ca(2+). The interval 214-227 is interaction with KCND2; the sequence is DNIMRSLQLFQNVM.

Belongs to the recoverin family. As to quaternary structure, component of heteromultimeric potassium channels. Identified in potassium channel complexes containing KCND1, KCND2, KCND3, KCNIP1, KCNIP2, KCNIP3, KCNIP4, DPP6 and DPP10. Part of a heterooctamer composed of the tetrameric channel and four KCNIP1 chains. Probably part of a complex consisting of KCNIP1, KCNIP2 isoform 3 and KCND2. Self-associates to form homodimers and homotetramers. Interacts with KCNIP2 isoform 3 in a calcium-dependent manner. Interacts with KCND2; this interaction mediates the capture of both the N- and C-terminus of KCND2, thus preventing KCND2 N-type inactivation and modulates the channel gating kinetics. Interacts with KCND3; each KCNIP1 monomer interacts with two adjacent KCND3 subunits, through both the N-terminal inactivation ball of a KCND3 subunit and a C-terminal helix from the adjacent KCND3 subunit, clamping them together; this interaction stabilizes the tetrameric form and modulates the channel gating kinetics namely channel activation and inactivation kinetics and rate of recovery from inactivation. As to expression, detected in hippocampus and in the molecular layer of the dentate gyrus (at protein level). Isoform 1 and isoform 2 are predominantly expressed at equal levels in brain. Colocalizes with KCND3 in inhibitory interneurons in cortex and hippocampus and in striatal interneurons.

It is found in the cell membrane. It localises to the cytoplasm. The protein resides in the cell projection. Its subcellular location is the dendrite. In terms of biological role, regulatory subunit of Kv4/D (Shal)-type voltage-gated rapidly inactivating A-type potassium channels. Regulates channel density, inactivation kinetics and rate of recovery from inactivation in a calcium-dependent and isoform-specific manner. Modulates KCND2/Kv4.2 currents. In vitro, modulates KCND1/Kv4.1 currents. Increases the presence of KCND2 at the cell surface. The chain is A-type potassium channel modulatory protein KCNIP1 from Rattus norvegicus (Rat).